The primary structure comprises 556 residues: Potassium-transporting ATPase potassium-binding subunit (556 aa).

10 consecutive transmembrane segments (helical) span residues 6–26, 65–85, 133–153, 176–196, 249–269, 283–303, 378–398, 419–439, 483–503, and 526–546; these read AGLI…VPLG, GVLA…LVQG, GLAV…VALV, LRIL…GGAI, PTAW…FSLP, YAIA…MLWF, GLYG…LMVG, YFLV…ALPG, ALGL…LALA, and FVGM…LPML.

The protein belongs to the KdpA family. In terms of assembly, the system is composed of three essential subunits: KdpA, KdpB and KdpC.

It localises to the cell membrane. Functionally, part of the high-affinity ATP-driven potassium transport (or Kdp) system, which catalyzes the hydrolysis of ATP coupled with the electrogenic transport of potassium into the cytoplasm. This subunit binds the extracellular potassium ions and delivers the ions to the membrane domain of KdpB through an intramembrane tunnel. This chain is Potassium-transporting ATPase potassium-binding subunit, found in Mycobacterium avium (strain 104).